Here is a 246-residue protein sequence, read N- to C-terminus: Probable fimbrial chaperone YadV (246 aa).

A signal peptide spans 1–25 (MFFNTKHTTALCFVTCMAFSSSSIA).

It belongs to the periplasmic pilus chaperone family.

Its subcellular location is the periplasm. Functionally, part of the yadCKLM-htrE-yadVN fimbrial operon. Could contribute to adhesion to various surfaces in specific environmental niches. This is Probable fimbrial chaperone YadV (yadV) from Escherichia coli (strain K12).